A 378-amino-acid chain; its full sequence is Nucleosome assembly protein 1;1 (378 aa).

The stretch at 33–87 (VNALKDKLQSLAGQHTDVLEALSPNVRKRVEYLREIQGQHDEIELKFFEERAALE) forms a coiled coil. Positions 54–69 (LSPNVRKRVEYLREIQ) match the Nuclear export signal motif. The Nuclear localization signal signature appears at 230-235 (KKKPKK). The segment at 306–378 (AVQAEDFDDM…ADQPADCKQQ (73 aa)) is disordered. A compositionally biased stretch (acidic residues) spans 308 to 344 (QAEDFDDMEDDEEDDEDDDEDEEEEEEDEDEDEDDEE). Positions 348 to 352 (KPKKK) match the Nuclear localization signal motif. Over residues 356-378 (KPKLPSKGGAQGGADQPADCKQQ) the composition is skewed to low complexity. The residue at position 375 (cysteine 375) is a Cysteine methyl ester. Cysteine 375 carries the S-farnesyl cysteine lipid modification. Positions 376–378 (KQQ) are cleaved as a propeptide — removed in mature form.

The protein belongs to the nucleosome assembly protein (NAP) family.

It is found in the nucleus. The protein resides in the cytoplasm. Functionally, may modulate chromatin structure by regulation of nucleosome assembly/disassembly. This is Nucleosome assembly protein 1;1 (NAP1;1) from Oryza sativa subsp. japonica (Rice).